The primary structure comprises 523 residues: MSFDNSARCGAMNAADEIIGPPLAQGLADQPAIVGGARSVTYGELEAMVNRTGNAMKAHGVGRGERVLFLMDDSPEMVAGYLGAMRIGAVAVALNVRLAPRDVRYVIEDSACRLLFVDAEFAHLYQEIAGELADPPQVVVRGAPQRIGMALDDFVAGQPDTLASEPAAPEDIAFWVYSSGTTGRPKAVMHSHGCVLIADRMEAEYFGVRPGDRIFATSKMFFGWALGHSMMGGLRCGATVIVAAGWPDPVRMIEVVDTHRPTLFFSTPVMYRNLLREGVGASEGFRNVRHFLSAGEKLPETLYQSWLEATGKPLIDGIGASETIFLFLVNDAGAQRPGSCGKPVPWAEVRLVDEAGADVVEPDIPGQIAIRTPSQFRGYWNLPEQTAKSLRDGWYFPGDMFSFDRDGYWYHNGRADDMLKISGQWVSPSEIEGCAMTAPGIAEAVVVGVPQEDGLTRLVLVAVPKDPSASQSRLSTQVQDTLMANLSIYKCPRTVRFVDELPRTATGKIQKFRLRELLKAGRL.

It belongs to the ATP-dependent AMP-binding enzyme family. Benzoate-CoA ligase subfamily.

It carries out the reaction 3-hydroxybenzoate + ATP + CoA = 3-hydroxybenzoyl-CoA + AMP + diphosphate. It catalyses the reaction 4-hydroxybenzoate + ATP + CoA = 4-hydroxybenzoyl-CoA + AMP + diphosphate. Its function is as follows. Ligase involved in the anaerobic degradation of 3-hydroxybenzoate (3OHBz). Catalyzes the activation of 3-hydroxybenzoate to 3-hydroxybenzoyl-CoA. Also shows high activity with protocatechuate and 4-hydroxybenzoate. Exhibits lower activity with benzoate, but cannot use 2-hydroxybenzoate or benzoate analogs containing other substituents at the ortho position, such as 2-aminobenzoate (anthranilate). The chain is 3-hydroxybenzoate--CoA ligase from Aromatoleum sp. (strain CIB) (Azoarcus sp. (strain CIB)).